A 418-amino-acid polypeptide reads, in one-letter code: Glutamyl-tRNA(Gln) amidotransferase subunit D (418 aa).

In terms of domain architecture, Asparaginase/glutaminase spans 74–405 (KNISILSTGG…KEAKELMSKN (332 aa)). Residues Thr-84, Thr-160, Asp-161, and Lys-237 contribute to the active site.

This sequence belongs to the asparaginase 1 family. GatD subfamily. In terms of assembly, heterodimer of GatD and GatE.

It carries out the reaction L-glutamyl-tRNA(Gln) + L-glutamine + ATP + H2O = L-glutaminyl-tRNA(Gln) + L-glutamate + ADP + phosphate + H(+). Its function is as follows. Allows the formation of correctly charged Gln-tRNA(Gln) through the transamidation of misacylated Glu-tRNA(Gln) in organisms which lack glutaminyl-tRNA synthetase. The reaction takes place in the presence of glutamine and ATP through an activated gamma-phospho-Glu-tRNA(Gln). The GatDE system is specific for glutamate and does not act on aspartate. The chain is Glutamyl-tRNA(Gln) amidotransferase subunit D from Methanococcus maripaludis (strain DSM 14266 / JCM 13030 / NBRC 101832 / S2 / LL).